We begin with the raw amino-acid sequence, 216 residues long: Adenylate kinase (216 aa).

10 to 15 (GAGKGT) provides a ligand contact to ATP. The tract at residues 30 to 59 (STGDMFRAAIKEGTPLGLQAKEYMDRGDLV) is NMP. Residues threonine 31, arginine 36, 57-59 (DLV), 85-88 (GFPR), and glutamine 92 each bind AMP. An LID region spans residues 126-163 (GRRICKNCGATYHLVFNPPAKSGVCDKCGGELYQRADD). Residue arginine 127 participates in ATP binding. Residues cysteine 130 and cysteine 133 each contribute to the Zn(2+) site. 136–137 (TY) provides a ligand contact to ATP. The Zn(2+) site is built by cysteine 150 and cysteine 153. AMP is bound by residues arginine 160 and arginine 171. Glutamine 199 contacts ATP.

It belongs to the adenylate kinase family. Monomer.

It localises to the cytoplasm. The catalysed reaction is AMP + ATP = 2 ADP. It functions in the pathway purine metabolism; AMP biosynthesis via salvage pathway; AMP from ADP: step 1/1. Its function is as follows. Catalyzes the reversible transfer of the terminal phosphate group between ATP and AMP. Plays an important role in cellular energy homeostasis and in adenine nucleotide metabolism. The protein is Adenylate kinase of Geobacillus sp. (strain WCH70).